A 337-amino-acid chain; its full sequence is Fructose-1,6-bisphosphatase class 1 (337 aa).

Residues glutamate 94, aspartate 116, leucine 118, and aspartate 119 each coordinate Mg(2+). Substrate contacts are provided by residues 119 to 122 (DGSS), asparagine 210, and lysine 276. Glutamate 282 serves as a coordination point for Mg(2+).

This sequence belongs to the FBPase class 1 family. In terms of assembly, homotetramer. It depends on Mg(2+) as a cofactor.

Its subcellular location is the cytoplasm. The catalysed reaction is beta-D-fructose 1,6-bisphosphate + H2O = beta-D-fructose 6-phosphate + phosphate. It participates in carbohydrate biosynthesis; gluconeogenesis. The protein is Fructose-1,6-bisphosphatase class 1 of Burkholderia cenocepacia (strain HI2424).